A 137-amino-acid polypeptide reads, in one-letter code: Mandibular organ-inhibiting hormone (137 aa).

The first 26 residues, 1 to 26 (MTTKCTVMAVVLAACICLQVLPQAYG), serve as a signal peptide directing secretion. Gln63 is subject to Pyrrolidone carboxylic acid. Disulfide bonds link Cys69–Cys105, Cys85–Cys101, and Cys88–Cys114. Val134 bears the Valine amide mark.

It belongs to the arthropod CHH/MIH/GIH/VIH hormone family. Produced by the medulla terminalis X-organ in the eyestalks and transported to the sinus gland where it is stored and released.

It localises to the secreted. In terms of biological role, represses the synthesis of methyl farnesoate, the precursor of insect juvenile hormone III in the mandibular organ. Also has hyperglycemic activity. The polypeptide is Mandibular organ-inhibiting hormone (Libinia emarginata (Portly spider crab)).